A 204-amino-acid chain; its full sequence is Carbon disulfide hydrolase (204 aa).

The Zn(2+) site is built by cysteine 35, histidine 88, and cysteine 91.

Belongs to the beta-class carbonic anhydrase family. Forms a hexadecameric catenane homooligomer, through interactions of two interlocked octameric rings. Zn(2+) is required as a cofactor.

The catalysed reaction is carbon disulfide + 2 H2O = 2 hydrogen sulfide + CO2 + 2 H(+). Its pathway is sulfur metabolism; hydrogen sulfide biosynthesis. Functionally, catalyzes the conversion of carbon disulfide into hydrogen sulfide and carbon dioxide, with carbonyl sulfide as an intermediate. Likely plays a key role in sulfur metabolism in S.solfataricus. Does not show carbonic anhydrase activity (hydration of CO(2) to carbonate). This is Carbon disulfide hydrolase from Saccharolobus solfataricus (strain ATCC 35092 / DSM 1617 / JCM 11322 / P2) (Sulfolobus solfataricus).